The sequence spans 558 residues: MRSDAIKKGHLKAPNRSLLRACGLNDDDFNKPFIGVANSYIDIIPGHFFLNEYAKIIKDEIRKNGCIPFEFNTIGVDDGIAMGHDGMLYSLPSREIIANSIETVMNAHQLDALICIPNCDKITPGMLMGALRVNVPTIFVSGGPMRAGVNKHGEKISLSSVFEAVGAYEAKKINEDDLKDIECKACPSGGSCSGMFTANSMNTLCEAMGIALEGNGTILALSKEREELLRKAARRICEIALDERFKIRNIITKKSINNALVVDMAMGGSSNTILHMLAIAYEAGVNLDIKELNHISANVAHIAKIAPSLNTVYMEDIHKAGGVSAVIAEIAKKPGHILELDTLDISGKTLKERIENASIKDENIIRKINNAYSNIGGLAILFGNLAEQGCVIKTAGIMGERKFKGKAVCFNSQEEAIKGIIKGKVKEGDVCVIRYEGPKGGPGMQEMLSPTSLLTGMGLGAKVALITDGRFSGATRGLSIGHISPEAAEGGLIALLEDGDEIEIDVDNYSINANLAQDEIAKRKANFKMPNKQINSRWLKMYQKLVSNASKGGVLDLE.

Residue Asp78 participates in Mg(2+) binding. Residue Cys119 coordinates [2Fe-2S] cluster. Positions 120 and 121 each coordinate Mg(2+). At Lys121 the chain carries N6-carboxylysine. Cys192 is a binding site for [2Fe-2S] cluster. Mg(2+) is bound at residue Glu446. Residue Ser472 is the Proton acceptor of the active site.

The protein belongs to the IlvD/Edd family. As to quaternary structure, homodimer. It depends on [2Fe-2S] cluster as a cofactor. The cofactor is Mg(2+).

The catalysed reaction is (2R)-2,3-dihydroxy-3-methylbutanoate = 3-methyl-2-oxobutanoate + H2O. The enzyme catalyses (2R,3R)-2,3-dihydroxy-3-methylpentanoate = (S)-3-methyl-2-oxopentanoate + H2O. It functions in the pathway amino-acid biosynthesis; L-isoleucine biosynthesis; L-isoleucine from 2-oxobutanoate: step 3/4. The protein operates within amino-acid biosynthesis; L-valine biosynthesis; L-valine from pyruvate: step 3/4. Functionally, functions in the biosynthesis of branched-chain amino acids. Catalyzes the dehydration of (2R,3R)-2,3-dihydroxy-3-methylpentanoate (2,3-dihydroxy-3-methylvalerate) into 2-oxo-3-methylpentanoate (2-oxo-3-methylvalerate) and of (2R)-2,3-dihydroxy-3-methylbutanoate (2,3-dihydroxyisovalerate) into 2-oxo-3-methylbutanoate (2-oxoisovalerate), the penultimate precursor to L-isoleucine and L-valine, respectively. This is Dihydroxy-acid dehydratase from Campylobacter lari (strain RM2100 / D67 / ATCC BAA-1060).